The chain runs to 167 residues: Peptide deformylase (167 aa).

Fe cation-binding residues include C91 and H133. E134 is a catalytic residue. A Fe cation-binding site is contributed by H137.

Belongs to the polypeptide deformylase family. Fe(2+) is required as a cofactor.

It carries out the reaction N-terminal N-formyl-L-methionyl-[peptide] + H2O = N-terminal L-methionyl-[peptide] + formate. In terms of biological role, removes the formyl group from the N-terminal Met of newly synthesized proteins. Requires at least a dipeptide for an efficient rate of reaction. N-terminal L-methionine is a prerequisite for activity but the enzyme has broad specificity at other positions. This is Peptide deformylase from Nitrosococcus oceani (strain ATCC 19707 / BCRC 17464 / JCM 30415 / NCIMB 11848 / C-107).